A 149-amino-acid chain; its full sequence is Large ribosomal subunit protein uL11 (149 aa).

This sequence belongs to the universal ribosomal protein uL11 family. In terms of assembly, part of the ribosomal stalk of the 50S ribosomal subunit. Interacts with L10 and the large rRNA to form the base of the stalk. L10 forms an elongated spine to which L12 dimers bind in a sequential fashion forming a multimeric L10(L12)X complex. Post-translationally, one or more lysine residues are methylated.

Its function is as follows. Forms part of the ribosomal stalk which helps the ribosome interact with GTP-bound translation factors. In Methylobacterium nodulans (strain LMG 21967 / CNCM I-2342 / ORS 2060), this protein is Large ribosomal subunit protein uL11.